The sequence spans 334 residues: L-lactate dehydrogenase B chain (334 aa).

Alanine 2 bears the N-acetylalanine mark. An N6-acetyllysine modification is found at lysine 7. Serine 44 carries the post-translational modification Phosphoserine. NAD(+) is bound by residues 53 to 58 (DVLEDK) and arginine 100. Lysine 58 carries the post-translational modification N6-acetyllysine. Arginine 107 is a substrate binding site. Lysine 119 is subject to N6-acetyllysine. Residue asparagine 139 participates in NAD(+) binding. Substrate contacts are provided by asparagine 139 and arginine 170. Histidine 194 acts as the Proton acceptor in catalysis. A Phosphotyrosine modification is found at tyrosine 240. Threonine 249 contributes to the substrate binding site. Lysine 329 is subject to N6-acetyllysine.

Belongs to the LDH/MDH superfamily. LDH family. In terms of assembly, homotetramer. Interacts with PTEN upstream reading frame protein MP31; the interaction leads to inhibition of mitochondrial lactate dehydrogenase activity, preventing conversion of lactate to pyruvate in mitochondria.

The protein localises to the cytoplasm. Its subcellular location is the mitochondrion inner membrane. It catalyses the reaction (S)-lactate + NAD(+) = pyruvate + NADH + H(+). The protein operates within fermentation; pyruvate fermentation to lactate; (S)-lactate from pyruvate: step 1/1. In terms of biological role, interconverts simultaneously and stereospecifically pyruvate and lactate with concomitant interconversion of NADH and NAD(+). The protein is L-lactate dehydrogenase B chain (LDHB) of Bos taurus (Bovine).